The sequence spans 362 residues: Ribosomal RNA large subunit methyltransferase F (362 aa).

A compositionally biased stretch (basic residues) spans 1 to 28 (MNTPLKPKHGQKTNRKPKANKPVVKKQQ). Residues 1 to 40 (MNTPLKPKHGQKTNRKPKANKPVVKKQQTKQPPTHKVQGE) are disordered.

It belongs to the methyltransferase superfamily. METTL16/RlmF family.

It is found in the cytoplasm. The enzyme catalyses adenosine(1618) in 23S rRNA + S-adenosyl-L-methionine = N(6)-methyladenosine(1618) in 23S rRNA + S-adenosyl-L-homocysteine + H(+). Specifically methylates the adenine in position 1618 of 23S rRNA. The chain is Ribosomal RNA large subunit methyltransferase F from Vibrio cholerae serotype O1 (strain M66-2).